Here is a 206-residue protein sequence, read N- to C-terminus: Peptidyl-tRNA hydrolase (206 aa).

Residue Tyr-14 participates in tRNA binding. His-19 (proton acceptor) is an active-site residue. Residues Tyr-64, Asn-66, and Asn-112 each contribute to the tRNA site.

It belongs to the PTH family. As to quaternary structure, monomer.

It localises to the cytoplasm. The catalysed reaction is an N-acyl-L-alpha-aminoacyl-tRNA + H2O = an N-acyl-L-amino acid + a tRNA + H(+). Functionally, hydrolyzes ribosome-free peptidyl-tRNAs (with 1 or more amino acids incorporated), which drop off the ribosome during protein synthesis, or as a result of ribosome stalling. Its function is as follows. Catalyzes the release of premature peptidyl moieties from peptidyl-tRNA molecules trapped in stalled 50S ribosomal subunits, and thus maintains levels of free tRNAs and 50S ribosomes. This Rhodopseudomonas palustris (strain ATCC BAA-98 / CGA009) protein is Peptidyl-tRNA hydrolase.